The chain runs to 316 residues: MAVQGSQRRLLGSLNSTPTAIPQLGLAANQTGARCLEVSIPDGLFLSLGLVSLVENVLVVATIAKNRNLHSPMYCFICCLALSDLLVSGSNVVDTLLLLLEAGALAARAAVLQQLDNVIDVITCSSMLSSLCFLGAIAVDRYISIFYALRYRSIVTLPRARRAVAAIWVASVLFSTLFIAYYDHTAVLLCLVVFFLAMLVLMAVLYVHMLARACQHAQGIARLHKRQRPVHKGFGLKGPVTLTILLGIFFLCWGPFFLHLTLIVLCPEHPTCGCIFKNFNLFLALIICNAIIDPLIYAFHSQELRRTLKEVLTCSW.

The Extracellular portion of the chain corresponds to 1–37 (MAVQGSQRRLLGSLNSTPTAIPQLGLAANQTGARCLE). N-linked (GlcNAc...) asparagine glycosylation occurs at Asn29. A helical transmembrane segment spans residues 38–63 (VSIPDGLFLSLGLVSLVENVLVVATI). Residues 64–72 (AKNRNLHSP) are Cytoplasmic-facing. The chain crosses the membrane as a helical span at residues 73 to 93 (MYCFICCLALSDLLVSGSNVV). The Extracellular segment spans residues 94–117 (DTLLLLLEAGALAARAAVLQQLDN). The chain crosses the membrane as a helical span at residues 118 to 139 (VIDVITCSSMLSSLCFLGAIAV). Topologically, residues 140-162 (DRYISIFYALRYRSIVTLPRARR) are cytoplasmic. A helical membrane pass occupies residues 163-182 (AVAAIWVASVLFSTLFIAYY). Topologically, residues 183-190 (DHTAVLLC) are extracellular. A helical membrane pass occupies residues 191-210 (LVVFFLAMLVLMAVLYVHML). At 211 to 239 (ARACQHAQGIARLHKRQRPVHKGFGLKGP) the chain is on the cytoplasmic side. Residues 240-265 (VTLTILLGIFFLCWGPFFLHLTLIVL) traverse the membrane as a helical segment. Topologically, residues 266-278 (CPEHPTCGCIFKN) are extracellular. A helical transmembrane segment spans residues 279–299 (FNLFLALIICNAIIDPLIYAF). The Cytoplasmic portion of the chain corresponds to 300 to 316 (HSQELRRTLKEVLTCSW). Cys314 carries S-palmitoyl cysteine lipidation.

It belongs to the G-protein coupled receptor 1 family. In terms of assembly, interacts with MGRN1, but does not undergo MGRN1-mediated ubiquitination; this interaction competes with GNAS-binding and thus inhibits agonist-induced cAMP production. Interacts with OPN3; the interaction results in a decrease in MC1R-mediated cAMP signaling and ultimately a decrease in melanin production in melanocytes.

It localises to the cell membrane. Its function is as follows. Receptor for MSH (alpha, beta and gamma) and ACTH. The activity of this receptor is mediated by G proteins which activate adenylate cyclase. Mediates melanogenesis, the production of eumelanin (black/brown) and phaeomelanin (red/yellow), via regulation of cAMP signaling in melanocytes. In Gorilla gorilla gorilla (Western lowland gorilla), this protein is Melanocyte-stimulating hormone receptor (MC1R).